A 520-amino-acid chain; its full sequence is Cyclin-L2 (520 aa).

Cyclin-like regions lie at residues 81–183 (ELIQ…RVLK) and 196–280 (KIIV…KILQ). Residues 309-520 (RAKGLLPPGS…DHPGHSRHRR (212 aa)) are disordered. S330, S337, S347, and S350 each carry phosphoserine. Positions 356 to 366 (RKMEGPKKAKG) are enriched in basic and acidic residues. S368 is modified (phosphoserine). Positions 384 to 422 (RSREQSYSRSPSRSASPKRRKSDSGSTSGGSKSQSRSRS) are RS. Residues 407 to 429 (SGSTSGGSKSQSRSRSRSDSPPR) are compositionally biased toward low complexity. Over residues 440-453 (SEVRGSRKSKDCKH) the composition is skewed to basic and acidic residues. Over residues 454 to 471 (LTQKPHKSRSRSSSRSRS) the composition is skewed to basic residues. 2 stretches are compositionally biased toward basic and acidic residues: residues 472-481 (RSRERTDSSG) and 489-514 (YYRD…DHPG).

It belongs to the cyclin family. Cyclin L subfamily. In terms of assembly, interacts with CDK11A, CDK11B, CDK12, CDK13 and POLR2A, the hyperphosphorylated C-terminal domain (CTD) of RNA polymerase II. May form a ternary complex with CDK11B and casein kinase II (CKII). Interacts with pre-mRNA-splicing factors, including at least SRSF1, SRSF2 and SRSF7/SLU7.

The protein localises to the nucleus speckle. The protein resides in the nucleus. It localises to the nucleoplasm. Involved in pre-mRNA splicing. May induce cell death, possibly by acting on the transcription and RNA processing of apoptosis-related factors. In Rattus norvegicus (Rat), this protein is Cyclin-L2 (Ccnl2).